Consider the following 204-residue polypeptide: Facilitator of iron transport 3 (204 aa).

Positions 1-18 are cleaved as a signal peptide; it reads MKFSSALVLSAVAATALA. 2 disordered regions span residues 84-104 and 133-175; these read SAAE…SGSS and EGSS…SSTA. Residues 135–175 show a composition bias toward low complexity; that stretch reads SSNTWSPSSTSTSSEAATSSASTTATTTAETSSSATSSSTA. G182 carries GPI-anchor amidated glycine lipidation. Residues 183-204 constitute a propeptide, removed in mature form; it reads AADAITAGTGLMGAALAAVMLL.

The GPI-anchor is attached to the protein in the endoplasmic reticulum and serves to target the protein to the cell surface. There, the glucosamine-inositol phospholipid moiety is cleaved off and the GPI-modified mannoprotein is covalently attached via its lipidless GPI glycan remnant to the 1,6-beta-glucan of the outer cell wall layer.

The protein localises to the secreted. It localises to the cell wall. It is found in the membrane. Involved in the uptake of non-siderophore and siderophore sources of iron. Has a role in the retention of iron in the cell wall and periplasmic space. The chain is Facilitator of iron transport 3 (FIT3) from Saccharomyces cerevisiae (strain ATCC 204508 / S288c) (Baker's yeast).